The chain runs to 209 residues: Octanoyltransferase (209 aa).

A BPL/LPL catalytic domain is found at 30 to 209 (DHKPEIIYLV…IQTEFNKIFK (180 aa)). Substrate contacts are provided by residues 69–76 (RGGKFTFH), 143–145 (AIG), and 156–158 (GVA). The Acyl-thioester intermediate role is filled by Cys-174.

Belongs to the LipB family.

The protein localises to the cytoplasm. It carries out the reaction octanoyl-[ACP] + L-lysyl-[protein] = N(6)-octanoyl-L-lysyl-[protein] + holo-[ACP] + H(+). The protein operates within protein modification; protein lipoylation via endogenous pathway; protein N(6)-(lipoyl)lysine from octanoyl-[acyl-carrier-protein]: step 1/2. Functionally, catalyzes the transfer of endogenously produced octanoic acid from octanoyl-acyl-carrier-protein onto the lipoyl domains of lipoate-dependent enzymes. Lipoyl-ACP can also act as a substrate although octanoyl-ACP is likely to be the physiological substrate. This chain is Octanoyltransferase, found in Rickettsia conorii (strain ATCC VR-613 / Malish 7).